The sequence spans 187 residues: Ribonuclease HII (187 aa).

The RNase H type-2 domain maps to 1 to 187 (MICGTDEAGR…NPVKRLLANL (187 aa)). D6, E7, and D98 together coordinate a divalent metal cation.

It belongs to the RNase HII family. Requires Mn(2+) as cofactor. Mg(2+) is required as a cofactor.

The protein resides in the cytoplasm. It carries out the reaction Endonucleolytic cleavage to 5'-phosphomonoester.. Its function is as follows. Endonuclease that specifically degrades the RNA of RNA-DNA hybrids. This chain is Ribonuclease HII, found in Idiomarina loihiensis (strain ATCC BAA-735 / DSM 15497 / L2-TR).